Here is a 131-residue protein sequence, read N- to C-terminus: Classical arabinogalactan protein 1 (131 aa).

An N-terminal signal peptide occupies residues 1–22 (MAFSKSLVFVLLAALLISSAVA). Positions 22–110 (AQSPAPAPSN…APGPAQGGAV (89 aa)) are disordered. The span at 50-60 (APAPEVSPSPS) shows a compositional bias: pro residues. Residues 61 to 72 (PAAALTPESSAS) are compositionally biased toward low complexity. Glycine 108 carries the GPI-anchor amidated glycine lipid modification. Residues 109–131 (AVSNKFASFGSVAVMLTAAVLVI) constitute a propeptide, removed in mature form.

It belongs to the classical AGP family. Post-translationally, O-glycosylated on the hydroxyproline residues. Predominantly expressed in flowers and at a lower level in roots and leaves.

Its subcellular location is the cell membrane. Functionally, proteoglycan that seems to be implicated in diverse developmental roles such as differentiation, cell-cell recognition, embryogenesis and programmed cell death. In Arabidopsis thaliana (Mouse-ear cress), this protein is Classical arabinogalactan protein 1 (AGP1).